The following is a 738-amino-acid chain: Photosystem I P700 chlorophyll a apoprotein A2 (738 aa).

A run of 8 helical transmembrane segments spans residues 46–69 (LFST…FHIA), 135–158 (LYQG…LHLQ), 175–199 (LNHH…HVAI), 273–291 (IAHH…GHMY), 333–356 (LHFQ…QHMY), 372–398 (AALY…IFFI), 420–442 (AIIS…LYVH), and 521–539 (FLVH…LILV). Cys-563 and Cys-572 together coordinate [4Fe-4S] cluster. 2 helical membrane passes run 579-600 (AFYL…YWHW) and 647-669 (LAVW…MFLI). Chlorophyll a contacts are provided by His-658, Met-666, and Tyr-674. Residue Trp-675 participates in phylloquinone binding. A helical transmembrane segment spans residues 711 to 731 (VVGLAHFTVGYVLTYGAFLIA).

Belongs to the PsaA/PsaB family. As to quaternary structure, the PsaA/B heterodimer binds the P700 chlorophyll special pair and subsequent electron acceptors. PSI consists of a core antenna complex that captures photons, and an electron transfer chain that converts photonic excitation into a charge separation. The cyanobacterial PSI reaction center is composed of one copy each of PsaA,B,C,D,E,F,I,J,K,L,M and X, and forms trimeric complexes. The cofactor is PSI electron transfer chain: 5 chlorophyll a, 1 chlorophyll a', 2 phylloquinones and 3 4Fe-4S clusters. PSI core antenna: 90 chlorophyll a, 22 carotenoids, 3 phospholipids and 1 galactolipid. P700 is a chlorophyll a/chlorophyll a' dimer, A0 is one or more chlorophyll a, A1 is one or both phylloquinones and FX is a shared 4Fe-4S iron-sulfur center..

It localises to the cellular thylakoid membrane. It catalyses the reaction reduced [plastocyanin] + hnu + oxidized [2Fe-2S]-[ferredoxin] = oxidized [plastocyanin] + reduced [2Fe-2S]-[ferredoxin]. PsaA and PsaB bind P700, the primary electron donor of photosystem I (PSI), as well as the electron acceptors A0, A1 and FX. PSI is a plastocyanin/cytochrome c6-ferredoxin oxidoreductase, converting photonic excitation into a charge separation, which transfers an electron from the donor P700 chlorophyll pair to the spectroscopically characterized acceptors A0, A1, FX, FA and FB in turn. Oxidized P700 is reduced on the lumenal side of the thylakoid membrane by plastocyanin or cytochrome c6. The sequence is that of Photosystem I P700 chlorophyll a apoprotein A2 from Synechococcus sp. (strain CC9311).